The chain runs to 1323 residues: Sister chromatid cohesion protein PDS5 homolog A-A (1323 aa).

An HEAT repeat occupies 385 to 421 (FLVNDQLLGFVRERTLDKRWRVRKEAMMGLAQLYKKY). Positions 1139–1323 (LNATGRRPYS…TAQRQIDLHR (185 aa)) are disordered. The span at 1153–1165 (SEISNNVSINSES) shows a compositional bias: low complexity. Composition is skewed to polar residues over residues 1166–1176 (DASVANRQSSE) and 1210–1220 (LDQTAPSNTGT). Over residues 1235–1246 (NIRKESEEKKAD) the composition is skewed to basic and acidic residues.

Interacts with the cohesin complex. Binds chromatin in a cohesin-dependent manner.

The protein resides in the nucleus. May regulate sister chromatid cohesion during mitosis and couple it to DNA replication. The polypeptide is Sister chromatid cohesion protein PDS5 homolog A-A (pds5a-a) (Xenopus laevis (African clawed frog)).